Reading from the N-terminus, the 210-residue chain is Putative protein-lysine deacylase ABHD14B (210 aa).

Ser91 is subject to Phosphoserine. Active-site charge relay system residues include Ser111, Asp162, and His188.

This sequence belongs to the AB hydrolase superfamily. ABHD14 family. As to quaternary structure, may interact with TAF1.

The protein localises to the cytoplasm. It localises to the nucleus. It catalyses the reaction L-lysyl-[protein] + acetyl-CoA = N(6)-acetyl-L-lysyl-[protein] + CoA + H(+). In terms of biological role, acts as an atypical protein-lysine deacetylase in vitro. Catalyzes the deacetylation of lysine residues using CoA as substrate, generating acetyl-CoA and the free amine of protein-lysine residues. Additional experiments are however required to confirm the protein-lysine deacetylase activity in vivo. Has hydrolase activity towards various surrogate p-nitrophenyl (pNp) substrates, such as pNp-butyrate, pNp-acetate and pNp-octanoate in vitro, with a strong preference for pNp-acetate. May activate transcription. The protein is Putative protein-lysine deacylase ABHD14B of Rattus norvegicus (Rat).